The chain runs to 393 residues: NAD(P)H-quinone oxidoreductase subunit H, chloroplastic (393 aa).

The protein belongs to the complex I 49 kDa subunit family. In terms of assembly, NDH is composed of at least 16 different subunits, 5 of which are encoded in the nucleus.

Its subcellular location is the plastid. It localises to the chloroplast thylakoid membrane. The catalysed reaction is a plastoquinone + NADH + (n+1) H(+)(in) = a plastoquinol + NAD(+) + n H(+)(out). The enzyme catalyses a plastoquinone + NADPH + (n+1) H(+)(in) = a plastoquinol + NADP(+) + n H(+)(out). Its function is as follows. NDH shuttles electrons from NAD(P)H:plastoquinone, via FMN and iron-sulfur (Fe-S) centers, to quinones in the photosynthetic chain and possibly in a chloroplast respiratory chain. The immediate electron acceptor for the enzyme in this species is believed to be plastoquinone. Couples the redox reaction to proton translocation, and thus conserves the redox energy in a proton gradient. The sequence is that of NAD(P)H-quinone oxidoreductase subunit H, chloroplastic from Panax ginseng (Korean ginseng).